The primary structure comprises 316 residues: 4-hydroxyphenylacetate decarboxylase activating enzyme (316 aa).

The Radical SAM core domain maps to 20-307; it reads HDGPGCRTTV…QDIFLDNGIA (288 aa). [4Fe-4S] cluster-binding residues include cysteine 34, cysteine 38, cysteine 41, cysteine 60, cysteine 66, cysteine 69, and cysteine 105. 40–42 is an S-adenosyl-L-methionine binding site; that stretch reads WCA. Residues 84-115 form the 4Fe-4S ferredoxin-type domain; sequence NKPVIDWNICKDCESFECVNSCYYNAFKLCAK. S-adenosyl-L-methionine contacts are provided by residues glycine 144, 193-195, and histidine 267; that span reads DIK.

Belongs to the organic radical-activating enzymes family. As to quaternary structure, monomer. It depends on [4Fe-4S] cluster as a cofactor.

It catalyses the reaction glycyl-[protein] + reduced [flavodoxin] + S-adenosyl-L-methionine = glycin-2-yl radical-[protein] + semiquinone [flavodoxin] + 5'-deoxyadenosine + L-methionine + H(+). Functionally, catalyzes activation of 4-hydroxyphenylacetate decarboxylase under anaerobic conditions by generation of an organic free radical on a glycine residue, via a homolytic cleavage of S-adenosyl-L-methionine (SAM). In Clostridioides difficile (Peptoclostridium difficile), this protein is 4-hydroxyphenylacetate decarboxylase activating enzyme.